Consider the following 295-residue polypeptide: Cytidine deaminase (295 aa).

CMP/dCMP-type deaminase domains lie at 48 to 168 (EDAD…FGPA) and 187 to 295 (DDDE…YLSL). 89–91 (NME) serves as a coordination point for substrate. Residue His-102 participates in Zn(2+) binding. The active-site Proton donor is the Glu-104. Cys-129 and Cys-132 together coordinate Zn(2+).

It belongs to the cytidine and deoxycytidylate deaminase family. As to quaternary structure, homodimer. The cofactor is Zn(2+).

It catalyses the reaction cytidine + H2O + H(+) = uridine + NH4(+). It carries out the reaction 2'-deoxycytidine + H2O + H(+) = 2'-deoxyuridine + NH4(+). In terms of biological role, this enzyme scavenges exogenous and endogenous cytidine and 2'-deoxycytidine for UMP synthesis. This chain is Cytidine deaminase, found in Vibrio cholerae serotype O1 (strain ATCC 39315 / El Tor Inaba N16961).